Here is a 258-residue protein sequence, read N- to C-terminus: Cytosolic Fe-S cluster assembly factor Nubp2 homolog (258 aa).

14–21 (GKGGVGKS) lines the ATP pocket. Residues Cys-188 and Cys-191 each contribute to the [4Fe-4S] cluster site.

Belongs to the Mrp/NBP35 ATP-binding proteins family. NUBP2/CFD1 subfamily. Heterotetramer of 2 Nubp1 and 2 Nubp2 chains. The cofactor is [4Fe-4S] cluster.

Its subcellular location is the cytoplasm. Functionally, component of the cytosolic iron-sulfur (Fe/S) protein assembly (CIA) machinery. Required for maturation of extramitochondrial Fe-S proteins. The Nubp1-Nubp2 heterotetramer forms a Fe-S scaffold complex, mediating the de novo assembly of an Fe-S cluster and its transfer to target apoproteins. In Drosophila pseudoobscura pseudoobscura (Fruit fly), this protein is Cytosolic Fe-S cluster assembly factor Nubp2 homolog.